Reading from the N-terminus, the 60-residue chain is DNA-directed RNA polymerase subunit Rpo6 (60 aa).

The protein belongs to the archaeal Rpo6/eukaryotic RPB6 RNA polymerase subunit family. In terms of assembly, part of the RNA polymerase complex.

The protein localises to the cytoplasm. It catalyses the reaction RNA(n) + a ribonucleoside 5'-triphosphate = RNA(n+1) + diphosphate. DNA-dependent RNA polymerase (RNAP) catalyzes the transcription of DNA into RNA using the four ribonucleoside triphosphates as substrates. This is DNA-directed RNA polymerase subunit Rpo6 from Picrophilus torridus (strain ATCC 700027 / DSM 9790 / JCM 10055 / NBRC 100828 / KAW 2/3).